Here is a 234-residue protein sequence, read N- to C-terminus: Leucyl/phenylalanyl-tRNA--protein transferase (234 aa).

It belongs to the L/F-transferase family.

It is found in the cytoplasm. The enzyme catalyses N-terminal L-lysyl-[protein] + L-leucyl-tRNA(Leu) = N-terminal L-leucyl-L-lysyl-[protein] + tRNA(Leu) + H(+). It carries out the reaction N-terminal L-arginyl-[protein] + L-leucyl-tRNA(Leu) = N-terminal L-leucyl-L-arginyl-[protein] + tRNA(Leu) + H(+). The catalysed reaction is L-phenylalanyl-tRNA(Phe) + an N-terminal L-alpha-aminoacyl-[protein] = an N-terminal L-phenylalanyl-L-alpha-aminoacyl-[protein] + tRNA(Phe). Functions in the N-end rule pathway of protein degradation where it conjugates Leu, Phe and, less efficiently, Met from aminoacyl-tRNAs to the N-termini of proteins containing an N-terminal arginine or lysine. This Salmonella agona (strain SL483) protein is Leucyl/phenylalanyl-tRNA--protein transferase.